We begin with the raw amino-acid sequence, 361 residues long: Ribosomal RNA large subunit methyltransferase M (361 aa).

Residues serine 190, 223-226, aspartate 242, aspartate 262, and aspartate 280 contribute to the S-adenosyl-L-methionine site; that span reads CPGG. Residue lysine 309 is the Proton acceptor of the active site.

Belongs to the class I-like SAM-binding methyltransferase superfamily. RNA methyltransferase RlmE family. RlmM subfamily. Monomer.

The protein localises to the cytoplasm. The catalysed reaction is cytidine(2498) in 23S rRNA + S-adenosyl-L-methionine = 2'-O-methylcytidine(2498) in 23S rRNA + S-adenosyl-L-homocysteine + H(+). Catalyzes the 2'-O-methylation at nucleotide C2498 in 23S rRNA. This chain is Ribosomal RNA large subunit methyltransferase M, found in Actinobacillus pleuropneumoniae serotype 7 (strain AP76).